The chain runs to 439 residues: tRNA(Ile)-lysidine synthase (439 aa).

23–28 lines the ATP pocket; it reads SGGLDS.

The protein belongs to the tRNA(Ile)-lysidine synthase family.

It is found in the cytoplasm. It catalyses the reaction cytidine(34) in tRNA(Ile2) + L-lysine + ATP = lysidine(34) in tRNA(Ile2) + AMP + diphosphate + H(+). Its function is as follows. Ligates lysine onto the cytidine present at position 34 of the AUA codon-specific tRNA(Ile) that contains the anticodon CAU, in an ATP-dependent manner. Cytidine is converted to lysidine, thus changing the amino acid specificity of the tRNA from methionine to isoleucine. This chain is tRNA(Ile)-lysidine synthase, found in Methylococcus capsulatus (strain ATCC 33009 / NCIMB 11132 / Bath).